The primary structure comprises 456 residues: Gamma-aminobutyric acid receptor subunit alpha-1 (456 aa).

A signal peptide spans 1–27; it reads MRKSPGLSDCLWAWILLLSTLTGRSYG. Residues 28–253 lie on the Extracellular side of the membrane; sequence QPSLQDELKD…FHLKRKIGYF (226 aa). N-linked (GlcNAc...) asparagine glycosylation is present at N38. R94 provides a ligand contact to 4-aminobutanoate. N138 is a glycosylation site (N-linked (GlcNAc...) asparagine). T157 contacts 4-aminobutanoate. Residues C166 and C180 are joined by a disulfide bond. The chain crosses the membrane as a helical span at residues 254–274; sequence VIQTYLPCIMTVILSQVSFWL. The Cytoplasmic segment spans residues 275–279; the sequence is NRESV. The chain crosses the membrane as a helical span at residues 280–301; it reads PARTVFGVTTVLTMTTLSISAR. Residues 302–311 lie on the Extracellular side of the membrane; that stretch reads NSLPKVAYAT. A helical transmembrane segment spans residues 312-333; the sequence is AMDWFIAVCYAFVFSALIEFAT. Topologically, residues 334–421 are cytoplasmic; that stretch reads VNYFTKRGYA…TFNSVSKIDR (88 aa). Residues 422 to 441 form a helical membrane-spanning segment; the sequence is LSRIAFPLLFGIFNLIYWAT. Over 442–456 the chain is Extracellular; it reads YLNREPQLKAPTPHQ.

This sequence belongs to the ligand-gated ion channel (TC 1.A.9) family. Gamma-aminobutyric acid receptor (TC 1.A.9.5) subfamily. GABRA1 sub-subfamily. As to quaternary structure, heteropentamer, formed by a combination of alpha (GABRA1-6), beta (GABRB1-3), gamma (GABRG1-3), delta (GABRD), epsilon (GABRE), rho (GABRR1-3), pi (GABRP) and theta (GABRQ) subunits, each subunit exhibiting distinct physiological and pharmacological properties. Interacts with UBQLN1. Interacts with TRAK1. Interacts with KIF21B. Identified in a complex of 720 kDa composed of LHFPL4, NLGN2, GABRA1, GABRB2, GABRG2 and GABRB3. Interacts with LHFPL4. Interacts with NLGN2. Interacts with SHISA7; interaction leads to the regulation of GABA(A) receptor trafficking, channel deactivation kinetics and pharmacology.

Its subcellular location is the postsynaptic cell membrane. The protein localises to the cell membrane. It localises to the cytoplasmic vesicle membrane. It catalyses the reaction chloride(in) = chloride(out). Allosterically activated by benzodiazepines, the neuroanesthetic alphaxalone and pentobarbital. Inhibited by the antagonist bicuculline. Potentiated by histamine. Functionally, alpha subunit of the heteropentameric ligand-gated chloride channel gated by gamma-aminobutyric acid (GABA), a major inhibitory neurotransmitter in the brain. GABA-gated chloride channels, also named GABA(A) receptors (GABAAR), consist of five subunits arranged around a central pore and contain GABA active binding site(s) located at the alpha and beta subunit interface(s). When activated by GABA, GABAARs selectively allow the flow of chloride anions across the cell membrane down their electrochemical gradient. Alpha-1/GABRA1-containing GABAARs are largely synaptic. Chloride influx into the postsynaptic neuron following GABAAR opening decreases the neuron ability to generate a new action potential, thereby reducing nerve transmission. GABAARs containing alpha-1 and beta-2 or -3 subunits exhibit synaptogenic activity; the gamma-2 subunit being necessary but not sufficient to induce rapid synaptic contacts formation. GABAARs function also as histamine receptor where histamine binds at the interface of two neighboring beta subunits and potentiates GABA response. GABAARs containing alpha, beta and epsilon subunits also permit spontaneous chloride channel activity while preserving the structural information required for GABA-gated openings. Alpha-1-mediated plasticity in the orbitofrontal cortex regulates context-dependent action selection. Together with rho subunits, may also control neuronal and glial GABAergic transmission in the cerebellum. This is Gamma-aminobutyric acid receptor subunit alpha-1 (GABRA1) from Pongo abelii (Sumatran orangutan).